The sequence spans 86 residues: Small ribosomal subunit protein bS16 (86 aa).

This sequence belongs to the bacterial ribosomal protein bS16 family.

This Carboxydothermus hydrogenoformans (strain ATCC BAA-161 / DSM 6008 / Z-2901) protein is Small ribosomal subunit protein bS16.